The sequence spans 106 residues: Large ribosomal subunit protein uL24 (106 aa).

Positions 84 to 97 (EKIGRELGAKEKAR) are enriched in basic and acidic residues. Positions 84–106 (EKIGRELGAKEKARLQKRKTAAK) are disordered.

Belongs to the universal ribosomal protein uL24 family. As to quaternary structure, part of the 50S ribosomal subunit.

Functionally, one of two assembly initiator proteins, it binds directly to the 5'-end of the 23S rRNA, where it nucleates assembly of the 50S subunit. In terms of biological role, one of the proteins that surrounds the polypeptide exit tunnel on the outside of the subunit. This Anaeromyxobacter dehalogenans (strain 2CP-1 / ATCC BAA-258) protein is Large ribosomal subunit protein uL24.